Here is a 122-residue protein sequence, read N- to C-terminus: Acidic phospholipase A2 (122 aa).

7 disulfides stabilise this stretch: Cys26-Cys115, Cys28-Cys44, Cys43-Cys95, Cys49-Cys122, Cys50-Cys88, Cys57-Cys81, and Cys75-Cys86. Ca(2+)-binding residues include Tyr27, Gly29, and Gly31. His47 is an active-site residue. Asp48 contributes to the Ca(2+) binding site. Residue Asp89 is part of the active site.

It belongs to the phospholipase A2 family. Group II subfamily. D49 sub-subfamily. In terms of assembly, monomer. Ca(2+) serves as cofactor. Expressed by the venom gland.

It localises to the secreted. The catalysed reaction is a 1,2-diacyl-sn-glycero-3-phosphocholine + H2O = a 1-acyl-sn-glycero-3-phosphocholine + a fatty acid + H(+). PLA2 catalyzes the calcium-dependent hydrolysis of the 2-acyl groups in 3-sn-phosphoglycerides. This Gloydius blomhoffii (Mamushi) protein is Acidic phospholipase A2.